The primary structure comprises 224 residues: Thiamine-phosphate synthase (224 aa).

4-amino-2-methyl-5-(diphosphooxymethyl)pyrimidine-binding positions include 44–48 and Asn-79; that span reads QFREK. Mg(2+)-binding residues include Asp-80 and Asp-99. Ser-117 is a binding site for 4-amino-2-methyl-5-(diphosphooxymethyl)pyrimidine. 143-145 contributes to the 2-[(2R,5Z)-2-carboxy-4-methylthiazol-5(2H)-ylidene]ethyl phosphate binding site; sequence TET. 4-amino-2-methyl-5-(diphosphooxymethyl)pyrimidine is bound at residue Lys-146. 2-[(2R,5Z)-2-carboxy-4-methylthiazol-5(2H)-ylidene]ethyl phosphate-binding positions include Gly-175 and 195 to 196; that span reads IS.

The protein belongs to the thiamine-phosphate synthase family. Mg(2+) is required as a cofactor.

The enzyme catalyses 2-[(2R,5Z)-2-carboxy-4-methylthiazol-5(2H)-ylidene]ethyl phosphate + 4-amino-2-methyl-5-(diphosphooxymethyl)pyrimidine + 2 H(+) = thiamine phosphate + CO2 + diphosphate. It carries out the reaction 2-(2-carboxy-4-methylthiazol-5-yl)ethyl phosphate + 4-amino-2-methyl-5-(diphosphooxymethyl)pyrimidine + 2 H(+) = thiamine phosphate + CO2 + diphosphate. The catalysed reaction is 4-methyl-5-(2-phosphooxyethyl)-thiazole + 4-amino-2-methyl-5-(diphosphooxymethyl)pyrimidine + H(+) = thiamine phosphate + diphosphate. The protein operates within cofactor biosynthesis; thiamine diphosphate biosynthesis; thiamine phosphate from 4-amino-2-methyl-5-diphosphomethylpyrimidine and 4-methyl-5-(2-phosphoethyl)-thiazole: step 1/1. In terms of biological role, condenses 4-methyl-5-(beta-hydroxyethyl)thiazole monophosphate (THZ-P) and 2-methyl-4-amino-5-hydroxymethyl pyrimidine pyrophosphate (HMP-PP) to form thiamine monophosphate (TMP). The polypeptide is Thiamine-phosphate synthase (Bacillus licheniformis (strain ATCC 14580 / DSM 13 / JCM 2505 / CCUG 7422 / NBRC 12200 / NCIMB 9375 / NCTC 10341 / NRRL NRS-1264 / Gibson 46)).